Reading from the N-terminus, the 99-residue chain is Aspartyl/glutamyl-tRNA(Asn/Gln) amidotransferase subunit C (99 aa).

It belongs to the GatC family. As to quaternary structure, heterotrimer of A, B and C subunits.

It carries out the reaction L-glutamyl-tRNA(Gln) + L-glutamine + ATP + H2O = L-glutaminyl-tRNA(Gln) + L-glutamate + ADP + phosphate + H(+). It catalyses the reaction L-aspartyl-tRNA(Asn) + L-glutamine + ATP + H2O = L-asparaginyl-tRNA(Asn) + L-glutamate + ADP + phosphate + 2 H(+). Allows the formation of correctly charged Asn-tRNA(Asn) or Gln-tRNA(Gln) through the transamidation of misacylated Asp-tRNA(Asn) or Glu-tRNA(Gln) in organisms which lack either or both of asparaginyl-tRNA or glutaminyl-tRNA synthetases. The reaction takes place in the presence of glutamine and ATP through an activated phospho-Asp-tRNA(Asn) or phospho-Glu-tRNA(Gln). In Orientia tsutsugamushi (strain Ikeda) (Rickettsia tsutsugamushi), this protein is Aspartyl/glutamyl-tRNA(Asn/Gln) amidotransferase subunit C.